Consider the following 442-residue polypeptide: Dol-P-Man:Man(5)GlcNAc(2)-PP-Dol alpha-1,3-mannosyltransferase (442 aa).

At methionine 1–lysine 34 the chain is on the lumenal side. The chain crosses the membrane as a helical span at residues leucine 35–valine 55. Topologically, residues proline 56–glycine 84 are cytoplasmic. Residues glycine 85–leucine 105 form a helical membrane-spanning segment. Over threonine 106 to asparagine 111 the chain is Lumenal. Residues isoleucine 112–glycine 132 form a helical membrane-spanning segment. At cysteine 133–serine 155 the chain is on the cytoplasmic side. A helical membrane pass occupies residues isoleucine 156 to phenylalanine 176. Over phenylalanine 177 to methionine 198 the chain is Lumenal. A helical transmembrane segment spans residues threonine 199–valine 219. A topological domain (cytoplasmic) is located at residue threonine 220. Residues threonine 221–alanine 241 form a helical membrane-spanning segment. Residues histidine 242–glutamate 272 are Lumenal-facing. The helical transmembrane segment at isoleucine 273 to isoleucine 293 threads the bilayer. The Cytoplasmic segment spans residues phenylalanine 294–aspartate 333. A helical membrane pass occupies residues valine 334–alanine 354. Over arginine 355 to alanine 376 the chain is Lumenal. A helical transmembrane segment spans residues glycine 377–phenylalanine 397. Over proline 398–proline 401 the chain is Cytoplasmic. A helical transmembrane segment spans residues alanine 402–alanine 422. Over arginine 423–arginine 442 the chain is Lumenal.

The protein belongs to the glycosyltransferase ALG3 family.

It is found in the endoplasmic reticulum membrane. It carries out the reaction an alpha-D-Man-(1-&gt;2)-alpha-D-Man-(1-&gt;2)-alpha-D-Man-(1-&gt;3)-[alpha-D-Man-(1-&gt;6)]-beta-D-Man-(1-&gt;4)-beta-D-GlcNAc-(1-&gt;4)-alpha-D-GlcNAc-diphospho-di-trans,poly-cis-dolichol + a di-trans,poly-cis-dolichyl beta-D-mannosyl phosphate = an alpha-D-Man-(1-&gt;2)-alpha-D-Man-(1-&gt;2)-alpha-D-Man-(1-&gt;3)-[alpha-D-Man-(1-&gt;3)-alpha-D-Man-(1-&gt;6)]-beta-D-Man-(1-&gt;4)-beta-D-GlcNAc-(1-&gt;4)-alpha-D-GlcNAc-diphospho-di-trans,poly-cis-dolichol + a di-trans,poly-cis-dolichyl phosphate + H(+). The protein operates within protein modification; protein glycosylation. Its function is as follows. Dol-P-Man:Man(5)GlcNAc(2)-PP-Dol alpha-1,3-mannosyltransferase that operates in the biosynthetic pathway of dolichol-linked oligosaccharides, the glycan precursors employed in protein asparagine (N)-glycosylation. The assembly of dolichol-linked oligosaccharides begins on the cytosolic side of the endoplasmic reticulum membrane and finishes in its lumen. The sequential addition of sugars to dolichol pyrophosphate produces dolichol-linked oligosaccharides containing fourteen sugars, including two GlcNAcs, nine mannoses and three glucoses. Once assembled, the oligosaccharide is transferred from the lipid to nascent proteins by oligosaccharyltransferases. In the lumen of the endoplasmic reticulum, adds the first dolichyl beta-D-mannosyl phosphate derived mannose in an alpha-1,3 linkage to Man(5)GlcNAc(2)-PP-dolichol to produce Man(6)GlcNAc(2)-PP-dolichol. In Neurospora crassa (strain ATCC 24698 / 74-OR23-1A / CBS 708.71 / DSM 1257 / FGSC 987), this protein is Dol-P-Man:Man(5)GlcNAc(2)-PP-Dol alpha-1,3-mannosyltransferase (alg-3).